A 267-amino-acid chain; its full sequence is Tetrahydromethanopterin S-methyltransferase subunit C (267 aa).

7 consecutive transmembrane segments (helical) span residues 19 to 39 (IMALGIVGGLVGIYLGNFAPP), 75 to 95 (IGMLALGMGILAALFGLSVGG), 97 to 117 (AGPIVAIVVAAIIGGVIGALA), 140 to 160 (TLVILGLSVVIAGSFDFASVV), 162 to 182 (YVVANGYIALIFIIGGMGILH), 198 to 218 (LMLAVEKGAIALIIAGFASSL), and 221 to 241 (GLMAAGLNMLIGIIIWYVAFS).

The protein belongs to the MtrC family. As to quaternary structure, the complex is composed of 8 subunits; MtrA, MtrB, MtrC, MtrD, MtrE, MtrF, MtrG and MtrH.

The protein localises to the cell membrane. The catalysed reaction is 5-methyl-5,6,7,8-tetrahydromethanopterin + coenzyme M + 2 Na(+)(in) = 5,6,7,8-tetrahydromethanopterin + methyl-coenzyme M + 2 Na(+)(out). The protein operates within one-carbon metabolism; methanogenesis from CO(2); methyl-coenzyme M from 5,10-methylene-5,6,7,8-tetrahydromethanopterin: step 2/2. In terms of biological role, part of a complex that catalyzes the formation of methyl-coenzyme M and tetrahydromethanopterin from coenzyme M and methyl-tetrahydromethanopterin. This is an energy-conserving, sodium-ion translocating step. This chain is Tetrahydromethanopterin S-methyltransferase subunit C, found in Methanosarcina barkeri (strain Fusaro / DSM 804).